The sequence spans 408 residues: MAASPEDRNLSDIRLCPIAGIRLGTAAAAIKHVGRDDVLLIEMAEGSACAAVFTQNAFCAAPVTVAREHLRQAPRWLLVNSGNANAGTGTRGLADARASCEAVAALVGGRADRVMPFSTGVIGEYLPLDKIRAALPKAFEALSEDGWEAAARAIMTTDTRPKKAVRRIEIAGRPVVVSGIAKGAGMIHPNMATMLAFVATDARIGAGLLQSVLERAVNRSFNCITVDGDTSTNDACVLMASQRSEAPLIEPGSAHVEAFQSAVDAVLAELAEAIVRDGEGATKFIRILVEEAASEDEARLVGKTIAHSPLVKTAFFASDPNWGRILAAVGRAGCKDLDISRVAIWLDEVRIVAAGARDREYTEARGITVMRRPEITVRVSLGRGQASARVMTCDLSLDYVRINAEYRT.

Substrate-binding residues include T156, K182, T193, E279, N403, and T408. The active-site Nucleophile is the T193.

Belongs to the ArgJ family. In terms of assembly, heterotetramer of two alpha and two beta chains.

The protein resides in the cytoplasm. It carries out the reaction N(2)-acetyl-L-ornithine + L-glutamate = N-acetyl-L-glutamate + L-ornithine. It catalyses the reaction L-glutamate + acetyl-CoA = N-acetyl-L-glutamate + CoA + H(+). It participates in amino-acid biosynthesis; L-arginine biosynthesis; L-ornithine and N-acetyl-L-glutamate from L-glutamate and N(2)-acetyl-L-ornithine (cyclic): step 1/1. It functions in the pathway amino-acid biosynthesis; L-arginine biosynthesis; N(2)-acetyl-L-ornithine from L-glutamate: step 1/4. In terms of biological role, catalyzes two activities which are involved in the cyclic version of arginine biosynthesis: the synthesis of N-acetylglutamate from glutamate and acetyl-CoA as the acetyl donor, and of ornithine by transacetylation between N(2)-acetylornithine and glutamate. This chain is Arginine biosynthesis bifunctional protein ArgJ, found in Methylococcus capsulatus (strain ATCC 33009 / NCIMB 11132 / Bath).